Reading from the N-terminus, the 126-residue chain is NADH-quinone oxidoreductase subunit A (126 aa).

The next 3 membrane-spanning stretches (helical) occupy residues 11–31, 64–84, and 98–118; these read IAIQLMVTLGFISVTLLSSWL, FLVATLFVLFDVEVIFFYPWA, and EGFVKMLLFMTSLLIGFIYVI.

Belongs to the complex I subunit 3 family. In terms of assembly, NDH-1 is composed of 14 different subunits. Subunits NuoA, H, J, K, L, M, N constitute the membrane sector of the complex.

The protein localises to the cell inner membrane. It carries out the reaction a quinone + NADH + 5 H(+)(in) = a quinol + NAD(+) + 4 H(+)(out). Functionally, NDH-1 shuttles electrons from NADH, via FMN and iron-sulfur (Fe-S) centers, to quinones in the respiratory chain. The immediate electron acceptor for the enzyme in this species is believed to be a menaquinone. Couples the redox reaction to proton translocation (for every two electrons transferred, four hydrogen ions are translocated across the cytoplasmic membrane), and thus conserves the redox energy in a proton gradient. This chain is NADH-quinone oxidoreductase subunit A, found in Cytophaga hutchinsonii (strain ATCC 33406 / DSM 1761 / CIP 103989 / NBRC 15051 / NCIMB 9469 / D465).